The following is a 616-amino-acid chain: Dihydroxy-acid dehydratase (616 aa).

Aspartate 81 is a binding site for Mg(2+). Residue cysteine 122 coordinates [2Fe-2S] cluster. 2 residues coordinate Mg(2+): aspartate 123 and lysine 124. The residue at position 124 (lysine 124) is an N6-carboxylysine. Cysteine 195 is a [2Fe-2S] cluster binding site. Residue glutamate 491 coordinates Mg(2+). The Proton acceptor role is filled by serine 517.

Belongs to the IlvD/Edd family. Homodimer. [2Fe-2S] cluster is required as a cofactor. Mg(2+) serves as cofactor.

It carries out the reaction (2R)-2,3-dihydroxy-3-methylbutanoate = 3-methyl-2-oxobutanoate + H2O. The enzyme catalyses (2R,3R)-2,3-dihydroxy-3-methylpentanoate = (S)-3-methyl-2-oxopentanoate + H2O. It participates in amino-acid biosynthesis; L-isoleucine biosynthesis; L-isoleucine from 2-oxobutanoate: step 3/4. It functions in the pathway amino-acid biosynthesis; L-valine biosynthesis; L-valine from pyruvate: step 3/4. In terms of biological role, functions in the biosynthesis of branched-chain amino acids. Catalyzes the dehydration of (2R,3R)-2,3-dihydroxy-3-methylpentanoate (2,3-dihydroxy-3-methylvalerate) into 2-oxo-3-methylpentanoate (2-oxo-3-methylvalerate) and of (2R)-2,3-dihydroxy-3-methylbutanoate (2,3-dihydroxyisovalerate) into 2-oxo-3-methylbutanoate (2-oxoisovalerate), the penultimate precursor to L-isoleucine and L-valine, respectively. This is Dihydroxy-acid dehydratase from Shigella sonnei (strain Ss046).